A 536-amino-acid polypeptide reads, in one-letter code: Hydroxylamine oxidoreductase (536 aa).

The N-terminal stretch at 1 to 26 (MFEIFKKPLSRIVGATFAFAGVTLLA) is a signal peptide. Heme c-binding residues include Cys-116, Cys-119, His-120, His-136, Cys-160, Cys-163, His-164, His-168, Cys-179, Cys-182, His-183, His-198, Cys-223, Cys-226, His-227, Cys-234, Cys-237, His-238, His-241, Cys-254, Cys-257, and His-258. Residue His-263 participates in hydroxylamine binding. Positions 274, 301, 304, 305, 311, 346, 349, 350, 443, and 451 each coordinate heme c.

As to quaternary structure, homotrimer; subunits are linked by two covalent bonds between Tyr-451 of one subunit and heme P460 of an adjacent subunit. Heme c serves as cofactor.

The protein resides in the anammoxosome. It carries out the reaction hydroxylamine + 3 Fe(III)-[cytochrome c] = nitric oxide + 3 Fe(II)-[cytochrome c] + 3 H(+). Functionally, catalyzes the oxidation of hydroxylamine to nitric oxide with cytochrome c acting as an electron acceptor. Does not oxidize hydroxylamine to nitrite. Also able to catalyze the four-electron oxidation of hydrazine to N(2) in vitro with reduced efficiency; however, this reaction is probably not physiological. This Kuenenia stuttgartiensis protein is Hydroxylamine oxidoreductase.